The following is a 649-amino-acid chain: Acetyl-coenzyme A synthetase (649 aa).

CoA-binding positions include 189 to 192 (RGGK), threonine 311, and asparagine 335. ATP is bound by residues 387–389 (GEP), 411–416 (DTWWQT), aspartate 500, and arginine 515. Serine 523 contributes to the CoA binding site. Arginine 526 provides a ligand contact to ATP. The Mg(2+) site is built by valine 537, histidine 539, and valine 542. Residue arginine 584 coordinates CoA. Lysine 609 bears the N6-acetyllysine mark.

This sequence belongs to the ATP-dependent AMP-binding enzyme family. Mg(2+) serves as cofactor. Acetylated. Deacetylation by the SIR2-homolog deacetylase activates the enzyme.

It carries out the reaction acetate + ATP + CoA = acetyl-CoA + AMP + diphosphate. In terms of biological role, catalyzes the conversion of acetate into acetyl-CoA (AcCoA), an essential intermediate at the junction of anabolic and catabolic pathways. AcsA undergoes a two-step reaction. In the first half reaction, AcsA combines acetate with ATP to form acetyl-adenylate (AcAMP) intermediate. In the second half reaction, it can then transfer the acetyl group from AcAMP to the sulfhydryl group of CoA, forming the product AcCoA. The sequence is that of Acetyl-coenzyme A synthetase from Rhizobium meliloti (strain 1021) (Ensifer meliloti).